Here is a 1026-residue protein sequence, read N- to C-terminus: Multidrug resistance protein MdtC (1026 aa).

Transmembrane regions (helical) follow at residues 15-35 (ILIAAAITLCGILGFRLLPVA), 333-353 (EVEETLAISVALVILVVFLFL), 360-380 (LIPAVAVPVSLIGTFAAMYLC), 387-407 (LSLMALTIATGFVVDDAIVVL), 431-451 (VGFTVISMSLSLVAVFLPLLL), 463-483 (FAVTLSVAIGISLVVSLTLTP), 528-548 (LVGVVFLGTVALNIWLYIAIP), 853-873 (LILIVAAIATVYIVLGILYES), 897-917 (LFNAPFSLIALIGIMLLIGIV), 953-973 (PIMMTTLAALFGALPLVLSGG), and 984-1004 (ITIVGGLVMSQLLTLYTTPVV).

Belongs to the resistance-nodulation-cell division (RND) (TC 2.A.6) family. MdtC subfamily. Part of a tripartite efflux system composed of MdtA, MdtB and MdtC. MdtC forms a heteromultimer with MdtB.

It localises to the cell inner membrane. This chain is Multidrug resistance protein MdtC, found in Salmonella agona (strain SL483).